A 103-amino-acid polypeptide reads, in one-letter code: Large ribosomal subunit protein bL21 (103 aa).

This sequence belongs to the bacterial ribosomal protein bL21 family. In terms of assembly, part of the 50S ribosomal subunit. Contacts protein L20.

In terms of biological role, this protein binds to 23S rRNA in the presence of protein L20. The chain is Large ribosomal subunit protein bL21 from Shewanella amazonensis (strain ATCC BAA-1098 / SB2B).